Reading from the N-terminus, the 695-residue chain is Polyribonucleotide nucleotidyltransferase (695 aa).

Mg(2+)-binding residues include aspartate 486 and aspartate 492. In terms of domain architecture, KH spans 553–612 (PRMIVFKINPEKIRDVIGKGGATIRALTEETGTTIDIVDDGTVKIFSADKADGQEAKRRV). The region spanning 622–690 (GKIYEGRVSR…KQGRVRLSVK (69 aa)) is the S1 motif domain.

It belongs to the polyribonucleotide nucleotidyltransferase family. In terms of assembly, component of the RNA degradosome, which is a multiprotein complex involved in RNA processing and mRNA degradation. The cofactor is Mg(2+).

It is found in the cytoplasm. It carries out the reaction RNA(n+1) + phosphate = RNA(n) + a ribonucleoside 5'-diphosphate. Functionally, involved in mRNA degradation. Catalyzes the phosphorolysis of single-stranded polyribonucleotides processively in the 3'- to 5'-direction. The chain is Polyribonucleotide nucleotidyltransferase from Nitrosococcus oceani (strain ATCC 19707 / BCRC 17464 / JCM 30415 / NCIMB 11848 / C-107).